The primary structure comprises 85 residues: LYR motif-containing protein 5A (85 aa).

It belongs to the complex I LYR family.

The protein is LYR motif-containing protein 5A (lyrm5a) of Danio rerio (Zebrafish).